We begin with the raw amino-acid sequence, 347 residues long: Phenylalanine--tRNA ligase alpha subunit (347 aa).

Glu-261 lines the Mg(2+) pocket.

Belongs to the class-II aminoacyl-tRNA synthetase family. Phe-tRNA synthetase alpha subunit type 1 subfamily. Tetramer of two alpha and two beta subunits. Mg(2+) is required as a cofactor.

It localises to the cytoplasm. It catalyses the reaction tRNA(Phe) + L-phenylalanine + ATP = L-phenylalanyl-tRNA(Phe) + AMP + diphosphate + H(+). This Streptococcus equi subsp. zooepidemicus (strain MGCS10565) protein is Phenylalanine--tRNA ligase alpha subunit.